Reading from the N-terminus, the 249-residue chain is BPI fold-containing family A member 2 (249 aa).

The first 18 residues, 1–18 (MLQLWKLVLLCGVLTGTS), serve as a signal peptide directing secretion. Residues N124 and N132 are each glycosylated (N-linked (GlcNAc...) asparagine). Cysteines 174 and 217 form a disulfide.

It belongs to the BPI/LBP/Plunc superfamily. Plunc family. In terms of tissue distribution, detected in submandibular gland. Secreted into saliva.

Its subcellular location is the secreted. In terms of biological role, has strong antibacterial activity against P.aeruginosa. The sequence is that of BPI fold-containing family A member 2 (BPIFA2) from Homo sapiens (Human).